The sequence spans 118 residues: Autophagy-related protein 8 (118 aa).

G116 carries the Phosphatidylethanolamine amidated glycine lipid modification. The propeptide at 117-118 (EA) is removed in mature form.

The protein belongs to the ATG8 family. In terms of assembly, conjugation to phosphatidylethanolamine (PE) leads to homodimerization. Interacts with ATG1, ATG3, ATG4, ATG7 and ATG12. The C-terminal Glu-117 and Ala-118 residues of ATG8 are removed by ATG4 to expose Gly-116 at the C-terminus. This Gly-116 forms then a thioester bond with the 'Cys-550' of ATG7 (E1-like activating enzyme) before being transferred to the 'Cys-244' of ATG3 (the specific E2 conjugating enzyme), in order to be finally amidated with phosphatidylethanolamine. This lipid modification anchors ATG8 to membranes and can be reversed by ATG4, releasing soluble ATG8.

Its subcellular location is the cytoplasmic vesicle. The protein resides in the cvt vesicle membrane. The protein localises to the autophagosome membrane. It is found in the vacuole membrane. Ubiquitin-like modifier involved in cytoplasm to vacuole transport (Cvt) vesicles and autophagosome formation. With ATG4, mediates the delivery of the vesicles and autophagosomes to the vacuole via the microtubule cytoskeleton. Required for selective autophagic degradation of the nucleus (nucleophagy) as well as for mitophagy which contributes to regulate mitochondrial quantity and quality by eliminating the mitochondria to a basal level to fulfill cellular energy requirements and preventing excess ROS production. Also participates in membrane fusion events that take place in the early secretory pathway. Also involved in endoplasmic reticulum-specific autophagic process and is essential for the survival of cells subjected to severe ER stress. The ATG8-PE conjugate mediates tethering between adjacent membranes and stimulates membrane hemifusion, leading to expansion of the autophagosomal membrane during autophagy. Moreover not only conjugation, but also subsequent ATG8-PE deconjugation is an important step required to facilitate multiple events during macroautophagy, and especially for efficient autophagosome biogenesis, the assembly of ATG9-containing tubulovesicular clusters into phagophores/autophagosomes, and for the disassembly of PAS-associated ATG components. Autophagy is required for proper vegetative growth, asexual/sexual reproduction, and full virulence. Autophagy is particularly involved in the biosynthesis of deoxynivalenol (DON), an important virulence determinant. The chain is Autophagy-related protein 8 from Gibberella zeae (strain ATCC MYA-4620 / CBS 123657 / FGSC 9075 / NRRL 31084 / PH-1) (Wheat head blight fungus).